Reading from the N-terminus, the 270-residue chain is NADPH-dependent aldehyde reductase-like protein, chloroplastic (270 aa).

A chloroplast-targeting transit peptide spans 1–53 (MSTHSSISQPPLPLAGRVAIVTGSSRGIGRAIAIHLAELGARIVINYTSKAAD). Position 26 to 50 (26 to 50 (RGIGRAIAIHLAELGARIVINYTSK)) interacts with NADP(+). S165 provides a ligand contact to substrate. Y178 acts as the Proton acceptor in catalysis.

It belongs to the short-chain dehydrogenases/reductases (SDR) family.

It localises to the plastid. The protein resides in the chloroplast. Aldehyde reductase that catalyzes the reduction of the aldehyde carbonyl groups on saturated and alpha,beta-unsaturated aldehydes with more than 5 carbons. This chain is NADPH-dependent aldehyde reductase-like protein, chloroplastic, found in Arabidopsis thaliana (Mouse-ear cress).